A 108-amino-acid chain; its full sequence is Transcription factor S (108 aa).

Zn(2+)-binding residues include cysteine 5, cysteine 8, cysteine 21, cysteine 24, cysteine 69, cysteine 72, cysteine 97, and cysteine 100. The C4-type zinc finger occupies 5-24 (CPKCNNLMLPKDGKLKCAVC). The TFIIS-type zinc finger occupies 65–105 (TRIECPKCGHNEAYWWLQQTRCADEPETRFYKCKKCGHTWR).

Belongs to the archaeal RpoM/eukaryotic RPA12/RPB9/RPC11 RNA polymerase family.

Induces RNA cleavage activity in the RNA polymerase. In its presence, the cleavage activity of the RNA polymerase truncates the RNA back to position +15 in a stepwise manner by releasing mainly dinucleotides from the 3'-end of the nascent RNA. The truncated RNAs are able to continue elongation. Involved in transcriptional proofreading and fidelity. Misincorporation of nucleotides during elongation of transcription leads to arrested elongation complexes which are rescued by TFS-promoted removal of a dinucleotide from the 3'-end. TFS is able to induce a cleavage resynthesis cycle in stalled elongation complexes (resulting from the next missing nucleotide or a reduced incorporation rate of a wrong nucleotide) preventing misincorporation and enabling proofreading in a post-incorporation manner. Pausing of elongation complexes is the main determinant of TFS-induced RNA cleavage. This is Transcription factor S from Methanocaldococcus jannaschii (strain ATCC 43067 / DSM 2661 / JAL-1 / JCM 10045 / NBRC 100440) (Methanococcus jannaschii).